We begin with the raw amino-acid sequence, 235 residues long: Orotidine 5'-phosphate decarboxylase (235 aa).

Residues Asp12, Lys34, 61-70, Thr121, Arg182, Gln191, Gly211, and Arg212 contribute to the substrate site; that span reads DLKFHDIPNT. Lys63 functions as the Proton donor in the catalytic mechanism.

Belongs to the OMP decarboxylase family. Type 1 subfamily. Homodimer.

It catalyses the reaction orotidine 5'-phosphate + H(+) = UMP + CO2. The protein operates within pyrimidine metabolism; UMP biosynthesis via de novo pathway; UMP from orotate: step 2/2. Catalyzes the decarboxylation of orotidine 5'-monophosphate (OMP) to uridine 5'-monophosphate (UMP). In Marinomonas sp. (strain MWYL1), this protein is Orotidine 5'-phosphate decarboxylase.